The following is a 118-amino-acid chain: uncharacterized protein (118 aa).

The disordered stretch occupies residues S49 to N80. A compositionally biased stretch (basic residues) spans H61 to P70.

This is an uncharacterized protein from Saccharomyces cerevisiae (strain ATCC 204508 / S288c) (Baker's yeast).